Consider the following 428-residue polypeptide: Probable 4-methylmuconolactone transporter (428 aa).

The Cytoplasmic portion of the chain corresponds to 1–26 (MFAWYKAGSPQQKKTFWACYSGWALD). Residues 27–47 (SFDMQMFSFLLPALTLTWGLT) form a helical membrane-spanning segment. The Periplasmic segment spans residues 48–50 (KAE). Residues 51–71 (VGVLGTVALVVTAIGGWGAGI) form a helical membrane-spanning segment. Residues 72–80 (LSDRYGRAR) are Cytoplasmic-facing. Residues 81-101 (ILVLAIIWFTLFGVLAGFAQS) traverse the membrane as a helical segment. Residues 102 to 110 (YQQLLIART) are Periplasmic-facing. A helical transmembrane segment spans residues 111–131 (LQGLGFGGEWAVGAALMAEVI). Topologically, residues 132–145 (DSRHRGKAIGFVQS) are cytoplasmic. The chain crosses the membrane as a helical span at residues 146 to 166 (GFALGWALAVVVATLLLAWLP). Residue lysine 167 is a topological domain, periplasmic. A helical transmembrane segment spans residues 168-188 (EMAWRVAFWSGIIPALIVLFI). Topologically, residues 189–227 (RRHVKDSSMFERARQSRAPRASLSSVFNRKYARTLALSS) are cytoplasmic. A helical transmembrane segment spans residues 228 to 248 (VLVIGLQAGCYAILVWLPSLL). At 249 to 252 (NQRQ) the chain is on the periplasmic side. The chain crosses the membrane as a helical span at residues 253-273 (VAAGSMIVTVFIMAFGSFCGF). Residues 274 to 287 (AVTADLSDRIGRRP) lie on the Cytoplasmic side of the membrane. A helical membrane pass occupies residues 288–308 (TLILLSVCAWIVTVSYMLLPL). At 309–314 (NTTLTA) the chain is on the periplasmic side. Residues 315-335 (ILGFLVGFSAIGMFAALGPFL) form a helical membrane-spanning segment. The Cytoplasmic segment spans residues 336 to 356 (SELFPTNVRTTCMGFAYNVGK). The chain crosses the membrane as a helical span at residues 357–371 (SIGAGSVVGVGVLST). The Periplasmic portion of the chain corresponds to 372 to 377 (HIGLAN). A helical membrane pass occupies residues 378–398 (AMGTFCLVAYAFAVFGIMLLP). The Cytoplasmic segment spans residues 399 to 428 (ETRGIAIENIGEADAHSPAAPLAQPASARS).

It belongs to the major facilitator superfamily. Sugar transporter (TC 2.A.1.1) family.

The protein resides in the cell inner membrane. Functionally, probable uptake of 4-methylmuconolactone. The chain is Probable 4-methylmuconolactone transporter from Cupriavidus pinatubonensis (strain JMP 134 / LMG 1197) (Cupriavidus necator (strain JMP 134)).